A 270-amino-acid chain; its full sequence is NAD(P)H-hydrate epimerase (270 aa).

The YjeF N-terminal domain occupies F25–Q234. D73–Q77 contributes to the (6S)-NADPHX binding site. The K(+) site is built by N74 and D144. Residues G148–H154 and E177 each bind (6S)-NADPHX. T180 contacts K(+).

The protein belongs to the NnrE/AIBP family. K(+) is required as a cofactor.

The enzyme catalyses (6R)-NADHX = (6S)-NADHX. It catalyses the reaction (6R)-NADPHX = (6S)-NADPHX. Its function is as follows. Catalyzes the epimerization of the S- and R-forms of NAD(P)HX, a damaged form of NAD(P)H that is a result of enzymatic or heat-dependent hydration. This is a prerequisite for the S-specific NAD(P)H-hydrate dehydratase to allow the repair of both epimers of NAD(P)HX. The protein is NAD(P)H-hydrate epimerase of Legionella pneumophila (strain Paris).